The primary structure comprises 166 residues: D-aminoacyl-tRNA deacylase (166 aa).

The Gly-cisPro motif, important for rejection of L-amino acids signature appears at Gly142 to Pro143.

It belongs to the DTD family. Homodimer.

It localises to the cytoplasm. The enzyme catalyses glycyl-tRNA(Ala) + H2O = tRNA(Ala) + glycine + H(+). The catalysed reaction is a D-aminoacyl-tRNA + H2O = a tRNA + a D-alpha-amino acid + H(+). Its function is as follows. An aminoacyl-tRNA editing enzyme that deacylates mischarged D-aminoacyl-tRNAs. Also deacylates mischarged glycyl-tRNA(Ala), protecting cells against glycine mischarging by AlaRS. Acts via tRNA-based rather than protein-based catalysis; rejects L-amino acids rather than detecting D-amino acids in the active site. By recycling D-aminoacyl-tRNA to D-amino acids and free tRNA molecules, this enzyme counteracts the toxicity associated with the formation of D-aminoacyl-tRNA entities in vivo and helps enforce protein L-homochirality. The chain is D-aminoacyl-tRNA deacylase from Ralstonia nicotianae (strain ATCC BAA-1114 / GMI1000) (Ralstonia solanacearum).